The primary structure comprises 244 residues: UDP-2,3-diacylglucosamine hydrolase (244 aa).

Mn(2+)-binding residues include Asp-8, His-10, Asp-41, Asn-79, and His-114. Residue 79–80 (NR) participates in substrate binding. 5 residues coordinate substrate: Asp-122, Ser-160, Asn-164, Lys-167, and His-195. Residues His-195 and His-197 each contribute to the Mn(2+) site.

It belongs to the LpxH family. Mn(2+) serves as cofactor.

The protein resides in the cell inner membrane. It carries out the reaction UDP-2-N,3-O-bis[(3R)-3-hydroxytetradecanoyl]-alpha-D-glucosamine + H2O = 2-N,3-O-bis[(3R)-3-hydroxytetradecanoyl]-alpha-D-glucosaminyl 1-phosphate + UMP + 2 H(+). It functions in the pathway glycolipid biosynthesis; lipid IV(A) biosynthesis; lipid IV(A) from (3R)-3-hydroxytetradecanoyl-[acyl-carrier-protein] and UDP-N-acetyl-alpha-D-glucosamine: step 4/6. Hydrolyzes the pyrophosphate bond of UDP-2,3-diacylglucosamine to yield 2,3-diacylglucosamine 1-phosphate (lipid X) and UMP by catalyzing the attack of water at the alpha-P atom. Involved in the biosynthesis of lipid A, a phosphorylated glycolipid that anchors the lipopolysaccharide to the outer membrane of the cell. The chain is UDP-2,3-diacylglucosamine hydrolase from Hahella chejuensis (strain KCTC 2396).